The sequence spans 382 residues: ATP phosphoribosyltransferase regulatory subunit (382 aa).

The protein belongs to the class-II aminoacyl-tRNA synthetase family. HisZ subfamily. Heteromultimer composed of HisG and HisZ subunits.

The protein resides in the cytoplasm. It participates in amino-acid biosynthesis; L-histidine biosynthesis; L-histidine from 5-phospho-alpha-D-ribose 1-diphosphate: step 1/9. Its function is as follows. Required for the first step of histidine biosynthesis. May allow the feedback regulation of ATP phosphoribosyltransferase activity by histidine. This Verminephrobacter eiseniae (strain EF01-2) protein is ATP phosphoribosyltransferase regulatory subunit.